We begin with the raw amino-acid sequence, 342 residues long: tRNA N6-adenosine threonylcarbamoyltransferase (342 aa).

Positions 111 and 115 each coordinate Fe cation. Substrate-binding positions include L134 to G138, D167, G180, and N277. D305 lines the Fe cation pocket.

It belongs to the KAE1 / TsaD family. Fe(2+) serves as cofactor.

Its subcellular location is the cytoplasm. The enzyme catalyses L-threonylcarbamoyladenylate + adenosine(37) in tRNA = N(6)-L-threonylcarbamoyladenosine(37) in tRNA + AMP + H(+). Required for the formation of a threonylcarbamoyl group on adenosine at position 37 (t(6)A37) in tRNAs that read codons beginning with adenine. Is involved in the transfer of the threonylcarbamoyl moiety of threonylcarbamoyl-AMP (TC-AMP) to the N6 group of A37, together with TsaE and TsaB. TsaD likely plays a direct catalytic role in this reaction. This chain is tRNA N6-adenosine threonylcarbamoyltransferase, found in Haemophilus influenzae (strain ATCC 51907 / DSM 11121 / KW20 / Rd).